The primary structure comprises 432 residues: GTPase Obg (432 aa).

One can recognise an Obg domain in the interval 1-158; sequence MFVDQVKIYV…RNIILELKLL (158 aa). The OBG-type G domain occupies 159 to 329; the sequence is ADVGLVGFPS…LLFAIADLLE (171 aa). Residues 165–172, 190–194, 212–215, 282–285, and 310–312 each bind GTP; these read GFPSVGKS, FTTLV, DLPG, NKMD, and SAA. Residues Ser172 and Thr192 each coordinate Mg(2+). The region spanning 350–428 is the OCT domain; sequence KYEKEEPPFT…LLDYEFEFVD (79 aa).

Belongs to the TRAFAC class OBG-HflX-like GTPase superfamily. OBG GTPase family. Monomer. Mg(2+) is required as a cofactor.

It is found in the cytoplasm. In terms of biological role, an essential GTPase which binds GTP, GDP and possibly (p)ppGpp with moderate affinity, with high nucleotide exchange rates and a fairly low GTP hydrolysis rate. Plays a role in control of the cell cycle, stress response, ribosome biogenesis and in those bacteria that undergo differentiation, in morphogenesis control. In Geobacillus kaustophilus (strain HTA426), this protein is GTPase Obg.